The chain runs to 311 residues: tRNA-cytidine(32) 2-sulfurtransferase (311 aa).

Residues 47–52 (SGGKDS) carry the PP-loop motif motif. [4Fe-4S] cluster contacts are provided by cysteine 122, cysteine 125, and cysteine 213.

This sequence belongs to the TtcA family. Homodimer. Requires Mg(2+) as cofactor. [4Fe-4S] cluster serves as cofactor.

It localises to the cytoplasm. It catalyses the reaction cytidine(32) in tRNA + S-sulfanyl-L-cysteinyl-[cysteine desulfurase] + AH2 + ATP = 2-thiocytidine(32) in tRNA + L-cysteinyl-[cysteine desulfurase] + A + AMP + diphosphate + H(+). It participates in tRNA modification. Catalyzes the ATP-dependent 2-thiolation of cytidine in position 32 of tRNA, to form 2-thiocytidine (s(2)C32). The sulfur atoms are provided by the cysteine/cysteine desulfurase (IscS) system. This Escherichia coli O157:H7 protein is tRNA-cytidine(32) 2-sulfurtransferase.